The chain runs to 405 residues: Cytochrome P450 130 (405 aa).

Substrate contacts are provided by aspartate 93 and histidine 97. 7 residues coordinate heme: arginine 101, glycine 243, arginine 295, tyrosine 318, serine 348, histidine 352, and cysteine 354.

Belongs to the cytochrome P450 family. In terms of assembly, homodimer. The cofactor is heme.

The sequence is that of Cytochrome P450 130 (cyp130) from Mycobacterium tuberculosis (strain CDC 1551 / Oshkosh).